The primary structure comprises 115 residues: uncharacterized protein (115 aa).

The next 2 helical transmembrane spans lie at 15–35 and 52–72; these read FSTQ…EVLF and FDGV…YYSI.

The protein localises to the membrane. This is an uncharacterized protein from Saccharomyces cerevisiae (strain ATCC 204508 / S288c) (Baker's yeast).